Reading from the N-terminus, the 148-residue chain is Large ribosomal subunit protein bL9 (148 aa).

This sequence belongs to the bacterial ribosomal protein bL9 family.

Functionally, binds to the 23S rRNA. The chain is Large ribosomal subunit protein bL9 from Pseudomonas syringae pv. tomato (strain ATCC BAA-871 / DC3000).